Reading from the N-terminus, the 262-residue chain is uncharacterized protein (262 aa).

7 helical membrane passes run 42 to 62 (IAKFNTIMYLVPYIITYTVLN), 71 to 91 (IINIVYLFVNVISGLFHLLYF), 115 to 135 (IGLAIVSFVYQLSMYIIMELI), 145 to 165 (VVSYLIKFIILTLYHSFCCFN), 185 to 205 (LWAYYLGYGTIASLMYIYSNH), 206 to 226 (PLMIYTYNIYMSILIILPFMI), and 235 to 255 (AYPSINLKIFSIIVGYFNYAI).

It localises to the membrane. This is an uncharacterized protein from Acanthamoeba polyphaga mimivirus (APMV).